Here is a 299-residue protein sequence, read N- to C-terminus: Tetrahydromethanopterin S-methyltransferase subunit E (299 aa).

The next 6 helical transmembrane spans lie at 57–77 (AISG…TIAW), 80–100 (INAG…AAIV), 133–153 (IGPI…AAYL), 158–178 (LGNP…VGAI), 226–246 (YFCS…IIFL), and 262–282 (VTKT…AAVI).

It belongs to the MtrE family. The complex is composed of 8 subunits; MtrA, MtrB, MtrC, MtrD, MtrE, MtrF, MtrG and MtrH.

It is found in the cell membrane. The enzyme catalyses 5-methyl-5,6,7,8-tetrahydromethanopterin + coenzyme M + 2 Na(+)(in) = 5,6,7,8-tetrahydromethanopterin + methyl-coenzyme M + 2 Na(+)(out). Its pathway is one-carbon metabolism; methanogenesis from CO(2); methyl-coenzyme M from 5,10-methylene-5,6,7,8-tetrahydromethanopterin: step 2/2. Part of a complex that catalyzes the formation of methyl-coenzyme M and tetrahydromethanopterin from coenzyme M and methyl-tetrahydromethanopterin. This is an energy-conserving, sodium-ion translocating step. This is Tetrahydromethanopterin S-methyltransferase subunit E from Methanococcus maripaludis (strain C7 / ATCC BAA-1331).